Here is a 296-residue protein sequence, read N- to C-terminus: Polyamine aminopropyltransferase (296 aa).

The PABS domain maps to 5–238 (ELWYETLHAN…GIMTFAWATQ (234 aa)). Q33 provides a ligand contact to S-methyl-5'-thioadenosine. The spermidine site is built by H64 and D88. S-methyl-5'-thioadenosine is bound by residues E108 and 140–141 (DG). The Proton acceptor role is filled by D158. A spermidine-binding site is contributed by 158–161 (DCTD). P165 is a binding site for S-methyl-5'-thioadenosine.

The protein belongs to the spermidine/spermine synthase family. In terms of assembly, homodimer or homotetramer.

The protein localises to the cytoplasm. It catalyses the reaction S-adenosyl 3-(methylsulfanyl)propylamine + putrescine = S-methyl-5'-thioadenosine + spermidine + H(+). It functions in the pathway amine and polyamine biosynthesis; spermidine biosynthesis; spermidine from putrescine: step 1/1. Functionally, catalyzes the irreversible transfer of a propylamine group from the amino donor S-adenosylmethioninamine (decarboxy-AdoMet) to putrescine (1,4-diaminobutane) to yield spermidine. The polypeptide is Polyamine aminopropyltransferase (Yersinia pestis bv. Antiqua (strain Antiqua)).